The sequence spans 457 residues: Siroheme synthase (457 aa).

The tract at residues 1 to 204 (MEIFPISLKL…DNLDIANQMM (204 aa)) is precorrin-2 dehydrogenase /sirohydrochlorin ferrochelatase. Residues 22 to 23 (HI) and 43 to 44 (PD) contribute to the NAD(+) site. Ser-129 is subject to Phosphoserine. A uroporphyrinogen-III C-methyltransferase region spans residues 216-457 (GEVYLVGAGP…VSLREQLQWL (242 aa)). Pro-225 is a binding site for S-adenosyl-L-methionine. Asp-248 acts as the Proton acceptor in catalysis. The Proton donor role is filled by Lys-270. S-adenosyl-L-methionine-binding positions include 301 to 303 (GGD), Ile-306, 331 to 332 (TA), Met-383, and Gly-412.

The protein in the N-terminal section; belongs to the precorrin-2 dehydrogenase / sirohydrochlorin ferrochelatase family. It in the C-terminal section; belongs to the precorrin methyltransferase family.

The enzyme catalyses uroporphyrinogen III + 2 S-adenosyl-L-methionine = precorrin-2 + 2 S-adenosyl-L-homocysteine + H(+). It carries out the reaction precorrin-2 + NAD(+) = sirohydrochlorin + NADH + 2 H(+). The catalysed reaction is siroheme + 2 H(+) = sirohydrochlorin + Fe(2+). Its pathway is cofactor biosynthesis; adenosylcobalamin biosynthesis; precorrin-2 from uroporphyrinogen III: step 1/1. The protein operates within cofactor biosynthesis; adenosylcobalamin biosynthesis; sirohydrochlorin from precorrin-2: step 1/1. It functions in the pathway porphyrin-containing compound metabolism; siroheme biosynthesis; precorrin-2 from uroporphyrinogen III: step 1/1. It participates in porphyrin-containing compound metabolism; siroheme biosynthesis; siroheme from sirohydrochlorin: step 1/1. Its pathway is porphyrin-containing compound metabolism; siroheme biosynthesis; sirohydrochlorin from precorrin-2: step 1/1. In terms of biological role, multifunctional enzyme that catalyzes the SAM-dependent methylations of uroporphyrinogen III at position C-2 and C-7 to form precorrin-2 via precorrin-1. Then it catalyzes the NAD-dependent ring dehydrogenation of precorrin-2 to yield sirohydrochlorin. Finally, it catalyzes the ferrochelation of sirohydrochlorin to yield siroheme. This is Siroheme synthase from Acinetobacter baylyi (strain ATCC 33305 / BD413 / ADP1).